A 352-amino-acid chain; its full sequence is CMP-sialic acid transporter 4 (352 aa).

Over 1–51 (MEYRKIKDEDDHDVASDIESVKGKSHTVASSNIAMATLGVGSSERINWKRK) the chain is Cytoplasmic. The helical transmembrane segment at 52-72 (GVVTCALTILTSSQAILIVWS) threads the bilayer. Residues 73 to 81 (KRAGKYEYS) are Lumenal-facing. Residues 82 to 102 (VTTANFLVGTLKCALSLLALT) form a helical membrane-spanning segment. The Cytoplasmic segment spans residues 103–124 (RIWKNEGVTDDNRLSTTFDEVK). The helical transmembrane segment at 125–145 (VFPIPAALYLFKNLLQYYIFA) threads the bilayer. The Lumenal segment spans residues 146–174 (YVDAPGYQILKNLNIISTGVLYRIILKRK). Residues 175 to 195 (LSEIQWAGFILLCCGCTTAQL) traverse the membrane as a helical segment. The Cytoplasmic portion of the chain corresponds to 196 to 210 (NSNSDRVLQTSLPGW). A helical transmembrane segment spans residues 211–231 (TMAIVMALLSGFAGVYTEAII). The Lumenal portion of the chain corresponds to 232–238 (KKRPSRN). Residues 239-259 (INVQNFWLYVFGMAFNAVAIV) form a helical membrane-spanning segment. The Cytoplasmic portion of the chain corresponds to 260–276 (IQDFDAVANKGFFHGYS). The chain crosses the membrane as a helical span at residues 277 to 297 (FITLLMILNHALSGIAVSMVM). Residues 298–313 (KYADNIVKVYSTSVAM) are Lumenal-facing. A helical membrane pass occupies residues 314–334 (LLTAVVSVFLFNFHLSLAFFL). Over 335 to 352 (GSTVVSVSVYLHSAGKLR) the chain is Cytoplasmic.

This sequence belongs to the nucleotide-sugar transporter family. CMP-Sialate:CMP antiporter (TC 2.A.7.12) subfamily.

It localises to the golgi apparatus membrane. In terms of biological role, sugar transporter involved in the transport of CMP-sialic acid from the cytoplasm into the Golgi. Essential protein. The sequence is that of CMP-sialic acid transporter 4 from Arabidopsis thaliana (Mouse-ear cress).